A 264-amino-acid chain; its full sequence is Type III pantothenate kinase (264 aa).

An ATP-binding site is contributed by 6–13 (DIGNTQTV). Substrate is bound by residues tyrosine 100 and 107-110 (GADR). The active-site Proton acceptor is the aspartate 109. Residue aspartate 129 participates in K(+) binding. Threonine 132 lines the ATP pocket. Threonine 185 contributes to the substrate binding site.

Belongs to the type III pantothenate kinase family. As to quaternary structure, homodimer. It depends on NH4(+) as a cofactor. The cofactor is K(+).

It localises to the cytoplasm. It carries out the reaction (R)-pantothenate + ATP = (R)-4'-phosphopantothenate + ADP + H(+). It functions in the pathway cofactor biosynthesis; coenzyme A biosynthesis; CoA from (R)-pantothenate: step 1/5. Its function is as follows. Catalyzes the phosphorylation of pantothenate (Pan), the first step in CoA biosynthesis. This Rubrobacter xylanophilus (strain DSM 9941 / JCM 11954 / NBRC 16129 / PRD-1) protein is Type III pantothenate kinase.